The primary structure comprises 233 residues: Probable dihydroorotate dehydrogenase B (NAD(+)), electron transfer subunit (233 aa).

An FAD-binding FR-type domain is found at 1–87 (MYRVVTIEEV…RGPYGHGFIK (87 aa)). [2Fe-2S] cluster-binding residues include Cys202, Cys207, Cys210, and Cys218.

The protein belongs to the PyrK family. As to quaternary structure, heterotetramer of 2 PyrK and 2 PyrD type B subunits. The cofactor is [2Fe-2S] cluster. FAD serves as cofactor.

Its pathway is pyrimidine metabolism; UMP biosynthesis via de novo pathway; orotate from (S)-dihydroorotate (NAD(+) route): step 1/1. In terms of biological role, responsible for channeling the electrons from the oxidation of dihydroorotate from the FMN redox center in the PyrD type B subunit to the ultimate electron acceptor NAD(+). The sequence is that of Probable dihydroorotate dehydrogenase B (NAD(+)), electron transfer subunit from Thermococcus kodakarensis (strain ATCC BAA-918 / JCM 12380 / KOD1) (Pyrococcus kodakaraensis (strain KOD1)).